The following is a 138-amino-acid chain: Rapid alkalinization factor 23 (138 aa).

An N-terminal signal peptide occupies residues 1 to 28 (MRGLSRNSGAAAIFAILLILAVHNWSVA). A propeptide spans 29-88 (VSSQSTEFAGDFPPFETECRGTIAECSVSAALGDGGDLFYGGGEMGEEFEMDSEINRRIL) (removed in mature form). Intrachain disulfides connect Cys-106–Cys-116 and Cys-129–Cys-135.

Belongs to the plant rapid alkalinization factor (RALF) family. Post-translationally, proteolytically cleaved, probably by SBT6.1 (S1P), a subtilisin-like serine protease (subtilase).

It is found in the secreted. Cell signaling peptide that may regulate plant stress, growth, and development. Mediates a rapid alkalinization of extracellular space by mediating a transient increase in the cytoplasmic Ca(2+) concentration leading to a calcium-dependent signaling events through a cell surface receptor and a concomitant activation of some intracellular mitogen-activated protein kinases. Negatively regulates brassinolide (BL)-mediated signaling pathway (e.g. BL-induced hypocotyl elongation and branching limitation). In Arabidopsis thaliana (Mouse-ear cress), this protein is Rapid alkalinization factor 23 (RALF23).